A 331-amino-acid chain; its full sequence is Eukaryotic translation initiation factor 2 subunit 2 (331 aa).

Disordered regions lie at residues 1–75 and 97–120; these read MSGD…DLNF and AIKD…LDIM. An N-acetylserine modification is found at Ser2. Residues Ser2 and Ser13 each carry the phosphoserine modification. The span at 13–22 shows a compositional bias: basic residues; that stretch reads SKKKKKKKKP. Thr36 is subject to Phosphothreonine. The segment covering 40–51 has biased composition (basic and acidic residues); that stretch reads ETKEVEPEPTEE. Ser67 carries the post-translational modification Phosphoserine. Residue Lys102 forms a Glycyl lysine isopeptide (Lys-Gly) (interchain with G-Cter in SUMO2) linkage. Residue Ser105 is modified to Phosphoserine. The segment covering 106-118 has biased composition (acidic residues); the sequence is DAQEPAEPEDDLD. Ser158 and Ser216 each carry phosphoserine. An N6-acetyllysine mark is found at Lys263 and Lys291. The segment at 279-303 adopts a C4-type zinc-finger fold; it reads CHTCRSPDTILQKDTRLYFLQCETC.

Belongs to the eIF-2-beta/eIF-5 family. Eukaryotic translation initiation factor 2 eIF2 is a heterotrimeric complex composed of an alpha (EIF2S1), a beta (EIF2S2) and a gamma (EIF2S3) chain. eIF2 is member of the 43S pre-initiation complex (43S PIC). eIF2 forms a complex with at least CELF1/CUGBP1, CALR, CALR3, EIF2S1, EIF2S2, HSP90B1 and HSPA5. Interacts with BZW2/5MP1. Interacts with EIF5.

It is found in the cytoplasm. Its subcellular location is the cytosol. Its function is as follows. Component of the eIF2 complex that functions in the early steps of protein synthesis by forming a ternary complex with GTP and initiator tRNA. This complex binds to a 40S ribosomal subunit, followed by mRNA binding to form the 43S pre-initiation complex (43S PIC). Junction of the 60S ribosomal subunit to form the 80S initiation complex is preceded by hydrolysis of the GTP bound to eIF2 and release of an eIF2-GDP binary complex. In order for eIF2 to recycle and catalyze another round of initiation, the GDP bound to eIF2 must exchange with GTP by way of a reaction catalyzed by eIF2B. This chain is Eukaryotic translation initiation factor 2 subunit 2 (Eif2s2), found in Mus musculus (Mouse).